We begin with the raw amino-acid sequence, 714 residues long: RB-associated KRAB zinc finger protein (714 aa).

Residues 8–79 (VSFKDVAVDF…GGEFPCQHSP (72 aa)) form the KRAB domain. Residues K97 and K259 each participate in a glycyl lysine isopeptide (Lys-Gly) (interchain with G-Cter in SUMO2) cross-link. Residues 171 to 260 (TYHGEKMCEF…YQRSQMEMKP (90 aa)) form a required for interaction with RB1 region. 2 consecutive C2H2-type zinc fingers follow at residues 261 to 283 (FECS…QRAH) and 289 to 311 (YECN…RRSH). K315 is covalently cross-linked (Glycyl lysine isopeptide (Lys-Gly) (interchain with G-Cter in SUMO2)). 7 consecutive C2H2-type zinc fingers follow at residues 317 to 339 (YKCN…LRTH), 345 to 367 (YECS…QRNH), 373 to 395 (YPCN…QRTH), 401 to 423 (YKCN…QRTH), 429 to 451 (YQCS…YRSH), 457 to 479 (YECN…RKVH), and 485 to 505 (HECS…HTAH). K357 is covalently cross-linked (Glycyl lysine isopeptide (Lys-Gly) (interchain with G-Cter in SUMO2)). The tract at residues 417–714 (ITHQRTHTGE…NMNVLDVENL (298 aa)) is interaction with AR. The segment at 511 to 533 (YECNECGKTFLVNSAFDGHQPLP) adopts a C2H2-type 10; degenerate zinc-finger fold. Residues K534 and K537 each participate in a glycyl lysine isopeptide (Lys-Gly) (interchain with G-Cter in SUMO2) cross-link. 6 consecutive C2H2-type zinc fingers follow at residues 539–561 (YECN…YRSH), 567–589 (YGCS…QRVH), 595–617 (YECY…HRIH), 623–645 (YECS…YRSH), 651–673 (YECN…YRTH), and 679–701 (YECN…QRIH).

The protein belongs to the krueppel C2H2-type zinc-finger protein family. Interacts with AR and RB1. May also interact with other nuclear hormone receptors such as NR3C1/GR. As to expression, expressed in bone, brain, heart, kidney, liver, lung, pancreas and placenta.

Its subcellular location is the nucleus. Functionally, may repress E2F-dependent transcription. May promote AR-dependent transcription. The protein is RB-associated KRAB zinc finger protein (RBAK) of Homo sapiens (Human).